The chain runs to 250 residues: Flavin-dependent thymidylate synthase (250 aa).

One can recognise a ThyX domain in the interval 7 to 233; the sequence is LRVQLIAKTD…PSIFGDFDIA (227 aa). FAD is bound by residues S71, 95-97, and Q103; that span reads RHR. Residues 92–95, 103–107, and R172 each bind dUMP; these read ELIR and QLSQR. Residues 95-105 carry the ThyX motif motif; that stretch reads RHRHFSYSQLS. FAD contacts are provided by residues 188-190 and H194; that span reads NYR. R199 is a binding site for dUMP. R199 acts as the Involved in ionization of N3 of dUMP, leading to its activation in catalysis.

This sequence belongs to the thymidylate synthase ThyX family. In terms of assembly, homotetramer. Requires FAD as cofactor.

It catalyses the reaction dUMP + (6R)-5,10-methylene-5,6,7,8-tetrahydrofolate + NADPH + H(+) = dTMP + (6S)-5,6,7,8-tetrahydrofolate + NADP(+). Its pathway is pyrimidine metabolism; dTTP biosynthesis. Its function is as follows. Catalyzes the reductive methylation of 2'-deoxyuridine-5'-monophosphate (dUMP) to 2'-deoxythymidine-5'-monophosphate (dTMP) while utilizing 5,10-methylenetetrahydrofolate (mTHF) as the methyl donor, and NADPH and FADH(2) as the reductant. This is Flavin-dependent thymidylate synthase from Mycobacteroides abscessus (strain ATCC 19977 / DSM 44196 / CCUG 20993 / CIP 104536 / JCM 13569 / NCTC 13031 / TMC 1543 / L948) (Mycobacterium abscessus).